The sequence spans 89 residues: Elongation factor 1-beta (89 aa).

Belongs to the EF-1-beta/EF-1-delta family.

Its function is as follows. Promotes the exchange of GDP for GTP in EF-1-alpha/GDP, thus allowing the regeneration of EF-1-alpha/GTP that could then be used to form the ternary complex EF-1-alpha/GTP/AAtRNA. This Methanococcus maripaludis (strain DSM 14266 / JCM 13030 / NBRC 101832 / S2 / LL) protein is Elongation factor 1-beta.